Consider the following 721-residue polypeptide: MQGKTQSISFDGREIRLTTGRFAPQAGGSVLVECGDTAVLVTATRSKGRDGIDFLPLICDYEERLYAAGRIPGSYMRREARPPERATLTCRLIDRPMRPLFPSWMRDDLQVVATCLSLDERVPSDVLAVTGASIATLLAGIPFNGPMAAVRVGLLGDDFVLNPSYREIERGDLDLVVAGTADGVVMVEAGANQLPEGDVIEAIDFGYEAIQELIKAQETLLKDLGIKQVKPEAPKEDTTVPAYLEKQCTKAISAVLSKFEQSKEDRDNGLEAVKADAAEAIAALKEDDAVRQAVSSSSKLLGNSFKALTKKLMRQQILKDGKRVDGRGLDEVRQISAMAGVLPRRVHGSGLFQRGLTQVLSTATLGTPSDAQEMDDLHPNTEKLYLHHYNFPPYSVGETRPMRSPGRREIGHGALAERAILPVLPEKDTFPYVVRVVSEVLSSNGSTSMGSVCGSTLALMDAGVPLKAPVSGAAMGLIKEGKDIKILTDIQGIEDFLGDMDFKVAGSEKGITALQMDMKITGLPVKVMAEAVNQARPARLHILEKMLEAIDKPRETLSPHAPRLLSFRIDPELIGTVIGPGGRTIKGITERTNTKIDIEDSGIVTIASHDGAAAEEAQKIIEGLTRKVNEGEMFSGSITRIIPIGAFVEILPGKEGMIHISQLSEARVEKVEDVVKVGDEVTVRVREIDNRGRINLTLRGVPQSGESTEVEPQPTPVAPLS.

Residues Asp495 and Asp501 each coordinate Mg(2+). One can recognise a KH domain in the interval 562 to 621; it reads PRLLSFRIDPELIGTVIGPGGRTIKGITERTNTKIDIEDSGIVTIASHDGAAAEEAQKII. Residues 631–699 enclose the S1 motif domain; that stretch reads GEMFSGSITR…NRGRINLTLR (69 aa). A disordered region spans residues 700 to 721; it reads GVPQSGESTEVEPQPTPVAPLS.

The protein belongs to the polyribonucleotide nucleotidyltransferase family. Mg(2+) serves as cofactor.

Its subcellular location is the cytoplasm. The enzyme catalyses RNA(n+1) + phosphate = RNA(n) + a ribonucleoside 5'-diphosphate. Involved in mRNA degradation. Catalyzes the phosphorolysis of single-stranded polyribonucleotides processively in the 3'- to 5'-direction. The chain is Polyribonucleotide nucleotidyltransferase from Synechococcus sp. (strain CC9902).